The sequence spans 223 residues: AN1-type zinc finger protein 6 (223 aa).

The A20-type zinc finger occupies 8-42 (SQAPMLCSTGCGFYGNPRTNGMCSVCYKEHLQRQN). Zn(2+)-binding residues include Cys14, Cys18, Cys30, and Cys33. Residues 41–155 (QNSSNGRISP…PSEEQSKSLE (115 aa)) form a disordered region. Ser49 is subject to Phosphoserine. 2 stretches are compositionally biased toward polar residues: residues 77–110 (ALDSTSSSMQPGPVSNQSLLSESVAPSQVDSTSV) and 137–148 (SSVSDTTQQPSE). The AN1-type zinc finger occupies 158-204 (KQKKNRCFMCRKKVGLTGFECRCGNVYCGVHRYSDVHNCSYNYKADA). Zn(2+) contacts are provided by Cys164, Cys167, Cys178, Cys180, Cys185, His188, His194, and Cys196. Lys219 carries the post-translational modification N6-acetyllysine.

In terms of assembly, interacts with PKN1. Interacts with TRAF2. Interacts with mono- and polyubiquitin. Interacts with PEX6. Interacts with PEX5 (Cys-linked ubiquitinated).

The protein resides in the cytoplasm. In terms of biological role, involved in regulation of TNF-alpha induced NF-kappa-B activation and apoptosis. Involved in modulation of 'Lys-48'-linked polyubiquitination status of TRAF2 and decreases association of TRAF2 with RIPK1. Required for PTS1 target sequence-dependent protein import into peroxisomes and PEX5 stability; may cooperate with PEX6. In vitro involved in PEX5 export from the cytosol to peroxisomes. The sequence is that of AN1-type zinc finger protein 6 (Zfand6) from Mus musculus (Mouse).